Reading from the N-terminus, the 894-residue chain is Low-affinity phosphate transporter PHO91 (894 aa).

An SPX domain is found at 1 to 256 (MKFSHSLQFN…NTNLKQNYLN (256 aa)). Disordered regions lie at residues 124 to 160 (QHQL…LTDM) and 293 to 321 (RPSN…EDGN). Residues 132–144 (RNRKSKSQQRQRR) show a composition bias toward basic residues. Positions 151-160 (TDSNPSLTDM) are enriched in polar residues. Residues serine 295, serine 311, and serine 312 each carry the phosphoserine modification. Transmembrane regions (helical) follow at residues 430–450 (LKFL…LTPF), 474–494 (TIPL…FPVI), 511–531 (FILS…FTLA), 557–577 (FILL…SNVA), 602–622 (ALIL…PIAS), 642–662 (FMIA…LLII), 682–702 (FTLK…LWCL), 706–726 (ISGI…VFFG), 738–758 (FMWT…AVSS), 777–797 (PIFI…TFVS), 799–819 (TVAA…LPSG), 824–844 (LLIV…TSGF), and 874–894 (SLLS…VMGF).

It belongs to the CitM (TC 2.A.11) transporter family. In terms of processing, ubiquitinated by RSP5. RSP5-mediated ubiquitination initiates internalization and degradation by the endocytic pathway.

It is found in the vacuole membrane. In terms of biological role, vacuolar phosphate transporter that probably exports phosphate from the vacuolar lumen to the cytosol. The protein is Low-affinity phosphate transporter PHO91 (PHO91) of Saccharomyces cerevisiae (strain ATCC 204508 / S288c) (Baker's yeast).